We begin with the raw amino-acid sequence, 391 residues long: Tryptophan synthase beta chain (391 aa).

Lysine 86 carries the N6-(pyridoxal phosphate)lysine modification.

This sequence belongs to the TrpB family. In terms of assembly, tetramer of two alpha and two beta chains. It depends on pyridoxal 5'-phosphate as a cofactor.

It carries out the reaction (1S,2R)-1-C-(indol-3-yl)glycerol 3-phosphate + L-serine = D-glyceraldehyde 3-phosphate + L-tryptophan + H2O. Its pathway is amino-acid biosynthesis; L-tryptophan biosynthesis; L-tryptophan from chorismate: step 5/5. In terms of biological role, the beta subunit is responsible for the synthesis of L-tryptophan from indole and L-serine. In Vibrio metschnikovii, this protein is Tryptophan synthase beta chain.